Consider the following 154-residue polypeptide: Small ribosomal subunit protein eS10 (154 aa).

The segment at 91–154 (ATMKKQASRP…ERSAPAPQQN (64 aa)) is disordered. Basic and acidic residues predominate over residues 124–135 (RGDRRQGGDRRG).

It belongs to the eukaryotic ribosomal protein eS10 family.

Its subcellular location is the cytoplasm. This is Small ribosomal subunit protein eS10 (rps10) from Dictyostelium discoideum (Social amoeba).